A 361-amino-acid polypeptide reads, in one-letter code: Basic helix-loop-helix protein 79 (361 aa).

Residues 66–159 are disordered; that stretch reads APEASNGSGS…ASTVTAGQKT (94 aa). Positions 124–138 are enriched in basic and acidic residues; that stretch reads GRPERARPGAKKKAE. Over residues 146–157 the composition is skewed to polar residues; the sequence is PATSASTVTAGQ. The short motif at 166-173 is the Nuclear localization signal element; the sequence is ARRGQATD. The tract at residues 170 to 183 is basic motif; degenerate; that stretch reads QATDSHSLAERVRR. A bHLH domain is found at 170-220; sequence QATDSHSLAERVRRERISERMRYLQELVPGCNKVTGKAGMLDEIINYVQSL. Positions 184 to 220 are helix-loop-helix motif; it reads ERISERMRYLQELVPGCNKVTGKAGMLDEIINYVQSL.

Belongs to the bHLH protein family. Homodimer. Interacts with IBH1.

It localises to the nucleus. Its function is as follows. Together with BCL1, positive regulator of cell elongation at least partially through increased gibberellic acid (GA) biosynthesis. In Oryza sativa subsp. indica (Rice), this protein is Basic helix-loop-helix protein 79.